Consider the following 215-residue polypeptide: Chitooligosaccharide deacetylase (215 aa).

Positions 18 to 209 (PSVYLTFDDG…ALHDRGFIIR (192 aa)) constitute a NodB homology domain. The active-site Proton acceptor is the Asp25. Residues His76 and His80 each coordinate a divalent metal cation. His171 serves as the catalytic Proton donor.

It belongs to the polysaccharide deacetylase family.

The protein localises to the cytoplasm. Its function is as follows. Is involved in generating a small heat-stable compound (Nod), an acylated oligomer of N-acetylglucosamine, that stimulates mitosis in various plant protoplasts. This is Chitooligosaccharide deacetylase (nodB) from Sinorhizobium fredii (strain NBRC 101917 / NGR234).